Reading from the N-terminus, the 1792-residue chain is Non-reducing polyketide synthase aptA (1792 aa).

Residues 1–395 (MKDNTHSTTL…PRSFAHSKLA (395 aa)) form an N-terminal acylcarrier protein transacylase domain (SAT) region. One can recognise a Ketosynthase family 3 (KS3) domain in the interval 391–824 (HSKLAVVGMA…GGNTTVLLED (434 aa)). Residues Cys564, His699, and His742 each act as for beta-ketoacyl synthase activity in the active site. The segment at 926-1243 (VFAFTGQGAF…NLVALHLAGC (318 aa)) is malonyl-CoA:ACP transacylase (MAT) domain. The segment at 1308-1625 (TSLIHEIIEE…PRLLMDRFFS (318 aa)) is product template (PT) domain. Residues 1312-1447 (HEIIEETIGE…GSVRFEADAE (136 aa)) are N-terminal hotdog fold. A PKS/mFAS DH domain is found at 1312 to 1621 (HEIIEETIGE…FRRVPRLLMD (310 aa)). His1344 serves as the catalytic Proton acceptor; for dehydratase activity. The C-terminal hotdog fold stretch occupies residues 1475–1621 (QASQLSKALS…FRRVPRLLMD (147 aa)). Asp1533 (proton donor; for dehydratase activity) is an active-site residue. A compositionally biased stretch (low complexity) spans 1634–1649 (VAASASSAPKTATKHA). The segment at 1634 to 1716 (VAASASSAPK…GPNGTTSQPE (83 aa)) is disordered. Residues 1664-1684 (TPSSLPTVQAQNTSPPQQVTP) show a composition bias toward polar residues. Over residues 1694 to 1705 (TPEEEKPGKADA) the composition is skewed to basic and acidic residues. The 78-residue stretch at 1715–1792 (PEATGVVGQC…DMMDWLEQYC (78 aa)) folds into the Carrier domain. Ser1752 bears the O-(pantetheine 4'-phosphoryl)serine mark.

Pantetheine 4'-phosphate is required as a cofactor.

It carries out the reaction holo-[ACP] + 8 malonyl-CoA + acetyl-CoA + 8 H(+) = 3,6,8,9-tetrahydroxy-1-oxo-3-(2-oxopropyl)-1,2,3,4-tetrahydroanthracene-2-carboxyl-[ACP] + 8 CO2 + 9 CoA + 2 H2O. Its pathway is secondary metabolite biosynthesis. Functionally, non-reducing polyketide synthase (NRPKS); part of the gene cluster that mediates the biosynthesis of asperthecin, an anthraquinone pigment. Catalyzes the formation of the aromatic polyketide from acetyl coenzyme A and seven malonyl coenzyme A molecules. Through its product template (PT) domain, catalyzes the cyclization of the polyketide backbone via C6-C11 aldolcondensation. Polyketide is subsequently hydrolyzed from the NRPKS by the action of the hydrolase aptB into endocrocin-9-anthrone. Endocrocin-9-anthrone is then oxidized into endocrocin by aptC. Endocrocin is likely to decarboxylate spontaneously to form emodin which explains why there is no decarboxylase in the asperthecin biosynthesis cluster. Finally, aptC or another endogenous oxygenase catalyzes additional oxidation steps to form asperthecin. The sequence is that of Non-reducing polyketide synthase aptA from Emericella nidulans (strain FGSC A4 / ATCC 38163 / CBS 112.46 / NRRL 194 / M139) (Aspergillus nidulans).